The primary structure comprises 678 residues: Protein distal antenna (678 aa).

Positions 7–58 constitute an HTH psq-type domain; the sequence is TKGKRPLRSLTPRDKIHAIQRIHDGESKASVARDIGVPESTLRGWCKNEDKL. Residues 34-54 constitute a DNA-binding region (H-T-H motif); it reads KASVARDIGVPESTLRGWCKN. Disordered regions lie at residues 232–310, 344–381, 445–528, 541–592, and 645–678; these read GAGN…GGPM, GVTS…PSGS, KETE…TSEC, GMEA…DEEE, and NETP…RRRK. Polar residues-rich tracts occupy residues 241 to 254 and 349 to 363; these read PSGQ…SPRS and PIRS…QLAQ. Residues S251 and S254 each carry the phosphoserine modification. A compositionally biased stretch (low complexity) spans 372–381; sequence LTPSSTPSGS. Residues 449–461 are compositionally biased toward polar residues; that stretch reads TPSVRSLSSNEQN. Positions 462–478 are enriched in acidic residues; sequence PEADEATETDLDGEVEP. Residues 495–508 show a composition bias toward polar residues; it reads TPSQSPIAHSSGSR. Over residues 570–586 the composition is skewed to low complexity; the sequence is NNNDVSASNNNNNNNSN. Over residues 657–667 the composition is skewed to acidic residues; it reads EDSEEHAAEEE.

As to quaternary structure, homomers. Interacts with itself, danr, ey and dac to form a complex (or complexes) containing the RD factors. Coexpressed with danr in the presumptive distal antenna, but not in the leg imaginal disk. Both proteins are also expressed in the brain and the eye region of the eye-antenna disk. First detected in early L3 eye disks in cells surrounding the newly initiated MF. Levels are uniform and high anterior to the furrow, lower levels within and posterior to the furrow. Limited expression is seen in small groups of cells in leg and wing. These appear in the location of prominent sense organ progenitors at relatively late stages of disk development.

Its subcellular location is the nucleus. Probable transcription factor with a role in the retinal determination (RD) network. Regulates ato expression and is required for normal R8 induction and differentiation. Danr appears to repress Dan expression, but Dan is required for Danr expression anterior to the morphogenetic furrow (MF). Dan and Danr lie downstream of so and require dac function for highest levels of expression. Contributes to differentiation of antenna-specific characteristics; effector gene that acts downstream of homothorax (hth), Distal-less (Dll), cut (ct) and spineless (ss) genes to control differentiation of distal antennal structures. This is Protein distal antenna from Drosophila melanogaster (Fruit fly).